A 336-amino-acid polypeptide reads, in one-letter code: NADH-quinone oxidoreductase subunit H (336 aa).

8 helical membrane passes run 14 to 34 (IIVA…AFLV), 82 to 102 (IIFL…WAVI), 115 to 135 (VGIL…IMAG), 161 to 181 (IGLV…SDVV), 186 to 206 (TVWF…SALA), 247 to 267 (ILMS…PLDV), 273 to 293 (VPGP…FVWV), and 312 to 332 (VFLP…VTFD).

The protein belongs to the complex I subunit 1 family. As to quaternary structure, NDH-1 is composed of 14 different subunits. Subunits NuoA, H, J, K, L, M, N constitute the membrane sector of the complex.

It is found in the cell inner membrane. The enzyme catalyses a quinone + NADH + 5 H(+)(in) = a quinol + NAD(+) + 4 H(+)(out). Its function is as follows. NDH-1 shuttles electrons from NADH, via FMN and iron-sulfur (Fe-S) centers, to quinones in the respiratory chain. The immediate electron acceptor for the enzyme in this species is believed to be ubiquinone. Couples the redox reaction to proton translocation (for every two electrons transferred, four hydrogen ions are translocated across the cytoplasmic membrane), and thus conserves the redox energy in a proton gradient. This subunit may bind ubiquinone. The protein is NADH-quinone oxidoreductase subunit H of Rhodospirillum centenum (strain ATCC 51521 / SW).